Consider the following 189-residue polypeptide: Mediator of RNA polymerase II transcription subunit 28 (189 aa).

A coiled-coil region spans residues 75 to 115 (YMLIKDENQDLSIEIQRKEALLQKHYNRLEEWKACLSDIQQ). Residues 124–147 (PIGSGMLQGPGGGMPPMGGTPPRP) are disordered. Positions 129 to 139 (MLQGPGGGMPP) are enriched in gly residues.

It belongs to the Mediator complex subunit 28 family. Component of the Mediator complex, which includes at least CDK8, MED4, MED6, MED11, MED14, MED17, MED18, MED20, MED21, MED22, MED27, MED28, MED30 and MED31.

It localises to the nucleus. Its function is as follows. Component of the Mediator complex, a coactivator involved in the regulated transcription of nearly all RNA polymerase II-dependent genes. Mediator functions as a bridge to convey information from gene-specific regulatory proteins to the basal RNA polymerase II transcription machinery. Mediator is recruited to promoters by direct interactions with regulatory proteins and serves as a scaffold for the assembly of a functional preinitiation complex with RNA polymerase II and the general transcription factors. The polypeptide is Mediator of RNA polymerase II transcription subunit 28 (MED28) (Drosophila melanogaster (Fruit fly)).